Reading from the N-terminus, the 467-residue chain is 3-isopropylmalate dehydratase large subunit (467 aa).

Cys347, Cys407, and Cys410 together coordinate [4Fe-4S] cluster. Over residues 422-442 (QISASSSNRNFKGRQGSSSGR) the composition is skewed to polar residues. The segment at 422-443 (QISASSSNRNFKGRQGSSSGRT) is disordered.

This sequence belongs to the aconitase/IPM isomerase family. LeuC type 1 subfamily. In terms of assembly, heterodimer of LeuC and LeuD. [4Fe-4S] cluster serves as cofactor.

The enzyme catalyses (2R,3S)-3-isopropylmalate = (2S)-2-isopropylmalate. It participates in amino-acid biosynthesis; L-leucine biosynthesis; L-leucine from 3-methyl-2-oxobutanoate: step 2/4. In terms of biological role, catalyzes the isomerization between 2-isopropylmalate and 3-isopropylmalate, via the formation of 2-isopropylmaleate. This chain is 3-isopropylmalate dehydratase large subunit, found in Nostoc punctiforme (strain ATCC 29133 / PCC 73102).